The chain runs to 481 residues: Dynein axonemal assembly factor 8 (481 aa).

4 disordered regions span residues 70–91 (DESGTWVTAGRSPSPEPLLVPG), 131–233 (LDTK…EGRP), 306–397 (TWKV…PVAS), and 415–454 (RAFRKGAVPPQLSAKDGPGGQKDQAQEDTGGSQTQRKKHI). Phosphoserine occurs at positions 83, 145, and 147. The span at 144 to 155 (GSQSPPWSSQGE) shows a compositional bias: polar residues. The segment covering 163–176 (GKLKTEPSDTDFKN) has biased composition (basic and acidic residues). Basic residues predominate over residues 177–188 (SAKRRALRRERR). The span at 198-211 (KVTQAAQNPASGDQ) shows a compositional bias: polar residues. Over residues 310 to 322 (SADKLQDTEEQVA) the composition is skewed to basic and acidic residues. Over residues 323 to 336 (RTRSASAESGFQTE) the composition is skewed to polar residues. A Phosphoserine modification is found at Ser-328. 2 stretches are compositionally biased toward basic and acidic residues: residues 337-349 (RVQKRAESRRLKT) and 359-380 (RLTEPSDPQEHQSQESSEHSSS).

The protein resides in the dynein axonemal particle. The protein localises to the cytoplasm. In cyliated cells, dynein axonemal particle-specific protein required for deployment of ODA to the axoneme. Interacts with outer dynein arm (ODA) subunits. This chain is Dynein axonemal assembly factor 8 (Dnaaf8), found in Rattus norvegicus (Rat).